The sequence spans 576 residues: Arginine--tRNA ligase (576 aa).

The 'HIGH' region signature appears at 132 to 142; that stretch reads ANPTGPMHIGH.

This sequence belongs to the class-I aminoacyl-tRNA synthetase family. Monomer.

The protein localises to the cytoplasm. It carries out the reaction tRNA(Arg) + L-arginine + ATP = L-arginyl-tRNA(Arg) + AMP + diphosphate. In Ehrlichia ruminantium (strain Gardel), this protein is Arginine--tRNA ligase.